A 197-amino-acid chain; its full sequence is Probable nicotinate-nucleotide adenylyltransferase (197 aa).

It belongs to the NadD family.

The enzyme catalyses nicotinate beta-D-ribonucleotide + ATP + H(+) = deamido-NAD(+) + diphosphate. It functions in the pathway cofactor biosynthesis; NAD(+) biosynthesis; deamido-NAD(+) from nicotinate D-ribonucleotide: step 1/1. In terms of biological role, catalyzes the reversible adenylation of nicotinate mononucleotide (NaMN) to nicotinic acid adenine dinucleotide (NaAD). The polypeptide is Probable nicotinate-nucleotide adenylyltransferase (Chlorobium phaeobacteroides (strain DSM 266 / SMG 266 / 2430)).